We begin with the raw amino-acid sequence, 343 residues long: Glucokinase (343 aa).

18–23 (GDIGGT) contacts ATP.

It belongs to the bacterial glucokinase family.

It is found in the cytoplasm. The enzyme catalyses D-glucose + ATP = D-glucose 6-phosphate + ADP + H(+). The protein is Glucokinase of Brucella abortus (strain 2308).